The primary structure comprises 139 residues: Nucleoside diphosphate kinase (139 aa).

ATP contacts are provided by lysine 10, phenylalanine 58, arginine 86, threonine 92, arginine 104, and asparagine 114. Residue histidine 117 is the Pros-phosphohistidine intermediate of the active site.

It belongs to the NDK family. Homotetramer. The cofactor is Mg(2+).

Its subcellular location is the cytoplasm. It catalyses the reaction a 2'-deoxyribonucleoside 5'-diphosphate + ATP = a 2'-deoxyribonucleoside 5'-triphosphate + ADP. It carries out the reaction a ribonucleoside 5'-diphosphate + ATP = a ribonucleoside 5'-triphosphate + ADP. In terms of biological role, major role in the synthesis of nucleoside triphosphates other than ATP. The ATP gamma phosphate is transferred to the NDP beta phosphate via a ping-pong mechanism, using a phosphorylated active-site intermediate. This Rhodococcus jostii (strain RHA1) protein is Nucleoside diphosphate kinase.